Here is a 359-residue protein sequence, read N- to C-terminus: Putative mannose-1-phosphate guanyltransferase (359 aa).

Belongs to the transferase hexapeptide repeat family.

The catalysed reaction is alpha-D-mannose 1-phosphate + GTP + H(+) = GDP-alpha-D-mannose + diphosphate. The protein is Putative mannose-1-phosphate guanyltransferase (mpg1) of Sulfolobus acidocaldarius (strain ATCC 33909 / DSM 639 / JCM 8929 / NBRC 15157 / NCIMB 11770).